Reading from the N-terminus, the 398-residue chain is MASADKGLEEIQEGQIESNYDETVDSFDTMNLKPELLRGVYAYGFERPSAIQQRAIMPVIKGHDVIAQAQSGTGKTATFSISVLQKLDPNVKQCQALILAPTRELAQQIQKVVVAIGDFMNVECHACIGGTSVRDDMKALQDGPQVVVGTPGRVHDMIQRRFLKTDSMKMFVLDEADEMLSRGFTEQIYDIFQLLPQSTQVVLLSATMPQDVLEVTTKFMRDPVRILVKKAELTLEGIKQFYIAVEKEDWKLDTLSDLYETVTITQAVIFCNTRRKVDWLTDKLTARDFTVSAMHGDMDQGQRDLIMKEFRSGSSRVLIATDLLARGIDVQQVSLVINYDLPANRENYIHRIGRGGRFGRKGVAINFVTADDVRMMREIEQFYSTQIEEMPMNVADLI.

Positions 25 to 53 (DSFDTMNLKPELLRGVYAYGFERPSAIQQ) match the Q motif motif. Positions 56–226 (IMPVIKGHDV…TKFMRDPVRI (171 aa)) constitute a Helicase ATP-binding domain. 69 to 76 (AQSGTGKT) provides a ligand contact to ATP. A DEAD box motif is present at residues 174–177 (DEAD). The Helicase C-terminal domain maps to 237-398 (GIKQFYIAVE…EMPMNVADLI (162 aa)).

It belongs to the DEAD box helicase family. eIF4A subfamily. As to quaternary structure, component of the eIF4F complex, which composition varies with external and internal environmental conditions. It is composed of at least eIF4A, eIF4E and eIF4G.

The protein localises to the cytoplasm. It carries out the reaction ATP + H2O = ADP + phosphate + H(+). Functionally, ATP-dependent RNA helicase which is a subunit of the eIF4F complex involved in cap recognition and is required for mRNA binding to ribosome. In the current model of translation initiation, eIF4A unwinds RNA secondary structures in the 5'-UTR of mRNAs which is necessary to allow efficient binding of the small ribosomal subunit, and subsequent scanning for the initiator codon. The protein is ATP-dependent RNA helicase eIF4A (tif1) of Botryotinia fuckeliana (strain B05.10) (Noble rot fungus).